We begin with the raw amino-acid sequence, 115 residues long: Nucleoid-associated protein Ccel_0243 (115 aa).

This sequence belongs to the YbaB/EbfC family. Homodimer.

The protein localises to the cytoplasm. It localises to the nucleoid. Its function is as follows. Binds to DNA and alters its conformation. May be involved in regulation of gene expression, nucleoid organization and DNA protection. This Ruminiclostridium cellulolyticum (strain ATCC 35319 / DSM 5812 / JCM 6584 / H10) (Clostridium cellulolyticum) protein is Nucleoid-associated protein Ccel_0243.